We begin with the raw amino-acid sequence, 97 residues long: Putative pterin-4-alpha-carbinolamine dehydratase (97 aa).

This sequence belongs to the pterin-4-alpha-carbinolamine dehydratase family.

The enzyme catalyses (4aS,6R)-4a-hydroxy-L-erythro-5,6,7,8-tetrahydrobiopterin = (6R)-L-erythro-6,7-dihydrobiopterin + H2O. This Cyanothece sp. (strain PCC 7425 / ATCC 29141) protein is Putative pterin-4-alpha-carbinolamine dehydratase.